A 383-amino-acid chain; its full sequence is Proton extrusion protein PxcA (383 aa).

A run of 4 helical transmembrane segments spans residues 163–183 (ILLLLILVPLLIQQVAGAYII), 258–278 (AVKNVFSDLSALIAFTVVCFA), 306–326 (IILFTDIFVGFHSPEGWTVLL), and 341–361 (FVMLFIATFPVILATIFKYWI).

This sequence belongs to the CemA family.

Its subcellular location is the cell inner membrane. Functionally, required for H(+) efflux immediately after light irradiation to form a rapid H(+) concentration gradient across the thylakoid membranes. Together with PxcL, contributes to transient H(+) uptake following dark to light transition. This chain is Proton extrusion protein PxcA, found in Synechococcus sp. (strain CC9902).